Reading from the N-terminus, the 175-residue chain is 2-oxo-4-hydroxy-4-carboxy-5-ureidoimidazoline decarboxylase (175 aa).

The active-site Proton donor is histidine 67. Residues proline 68, 84–88 (SRGEQ), and 119–123 (FVICA) each bind substrate. The Microbody targeting signal signature appears at 173-175 (TKL).

The protein belongs to the OHCU decarboxylase family. In terms of assembly, homodimer.

It localises to the peroxisome. It catalyses the reaction 5-hydroxy-2-oxo-4-ureido-2,5-dihydro-1H-imidazole-5-carboxylate + H(+) = (S)-allantoin + CO2. It participates in purine metabolism; urate degradation; (S)-allantoin from urate: step 3/3. Catalyzes the stereoselective decarboxylation of 2-oxo-4-hydroxy-4-carboxy-5-ureidoimidazoline (OHCU) to (S)-allantoin. In Amia calva (Bowfin), this protein is 2-oxo-4-hydroxy-4-carboxy-5-ureidoimidazoline decarboxylase (urad).